The sequence spans 217 residues: Small ribosomal subunit protein uS3c (217 aa).

One can recognise a KH type-2 domain in the interval 46–117 (VQKHIKNSSN…RLRMTLIEIA (72 aa)).

It belongs to the universal ribosomal protein uS3 family. In terms of assembly, part of the 30S ribosomal subunit.

The protein localises to the plastid. It localises to the chloroplast. In Marchantia polymorpha (Common liverwort), this protein is Small ribosomal subunit protein uS3c (rps3).